The following is a 65-amino-acid chain: Muscarinic toxin 3 (65 aa).

Cystine bridges form between cysteine 3–cysteine 24, cysteine 17–cysteine 42, cysteine 46–cysteine 57, and cysteine 58–cysteine 63.

This sequence belongs to the three-finger toxin family. Short-chain subfamily. Aminergic toxin sub-subfamily. As to expression, expressed by the venom gland.

Its subcellular location is the secreted. Functionally, potent antagonist (IC(50)=1-10 nM) of M4 (CHRM4) muscarinic receptors, and CHRM1, ADRA1A, ADRA2A and ADRA2C adrenergic receptors. Also antagonises ADRA1B and ADRA1D adrenergic receptors with a 10-times lower affinity. The sequence is that of Muscarinic toxin 3 from Dendroaspis angusticeps (Eastern green mamba).